A 458-amino-acid polypeptide reads, in one-letter code: NADH-ubiquinone oxidoreductase chain 4 (458 aa).

The next 13 membrane-spanning stretches (helical) occupy residues 23–43, 59–79, 99–119, 148–168, 174–194, 197–217, 227–247, 260–280, 289–311, 315–337, 355–375, 396–416, and 438–458; these read LLWT…TLTL, IDQF…LTIM, LLIL…LLMF, LYFL…LIMI, SLSI…TPWS, LWWI…IFHL, PIAG…YGMI, LAVP…SICL, IAYS…TPWA, ALAM…NITY, FPLM…LPPF, ILLL…MLIM, and LMLM…AIMI.

The protein belongs to the complex I subunit 4 family.

It localises to the mitochondrion membrane. The enzyme catalyses a ubiquinone + NADH + 5 H(+)(in) = a ubiquinol + NAD(+) + 4 H(+)(out). Core subunit of the mitochondrial membrane respiratory chain NADH dehydrogenase (Complex I) that is believed to belong to the minimal assembly required for catalysis. Complex I functions in the transfer of electrons from NADH to the respiratory chain. The immediate electron acceptor for the enzyme is believed to be ubiquinone. The sequence is that of NADH-ubiquinone oxidoreductase chain 4 (MT-ND4) from Petromyzon marinus (Sea lamprey).